Reading from the N-terminus, the 505-residue chain is Maturase K (505 aa).

The protein belongs to the intron maturase 2 family. MatK subfamily.

It localises to the plastid. Its subcellular location is the chloroplast. Usually encoded in the trnK tRNA gene intron. Probably assists in splicing its own and other chloroplast group II introns. This is Maturase K from Gomphrena pulchella (Globe amaranth).